The sequence spans 746 residues: NAD(P)H-quinone oxidoreductase subunit 5, chloroplastic (746 aa).

The next 16 helical transmembrane spans lie at 9–29 (WIIP…LLLF), 40–60 (WTFL…YLSI), 89–109 (IDPL…LVLI), 125–145 (FAYM…SNLI), 147–167 (VYFF…FWFT), 185–205 (GDFG…SFEF), 221–241 (VNFL…IAKS), 258–278 (TPIS…FLVA), 280–300 (LLPL…IGII), 327–347 (LGYM…FHLI), 354–374 (ALLF…VGYS), 396–416 (TAFL…CFWS), 425–445 (LLFS…TAFY), 547–567 (ILFP…IGIP), 608–628 (FSVS…KPFY), and 723–743 (YLFL…FFYF).

This sequence belongs to the complex I subunit 5 family. In terms of assembly, NDH is composed of at least 16 different subunits, 5 of which are encoded in the nucleus.

It localises to the plastid. The protein localises to the chloroplast thylakoid membrane. It carries out the reaction a plastoquinone + NADH + (n+1) H(+)(in) = a plastoquinol + NAD(+) + n H(+)(out). The catalysed reaction is a plastoquinone + NADPH + (n+1) H(+)(in) = a plastoquinol + NADP(+) + n H(+)(out). NDH shuttles electrons from NAD(P)H:plastoquinone, via FMN and iron-sulfur (Fe-S) centers, to quinones in the photosynthetic chain and possibly in a chloroplast respiratory chain. The immediate electron acceptor for the enzyme in this species is believed to be plastoquinone. Couples the redox reaction to proton translocation, and thus conserves the redox energy in a proton gradient. The polypeptide is NAD(P)H-quinone oxidoreductase subunit 5, chloroplastic (ndhF) (Barbarea verna (Land cress)).